A 496-amino-acid polypeptide reads, in one-letter code: Catalase-A (496 aa).

Active-site residues include His-54 and Asn-128. Tyr-338 serves as a coordination point for heme. A Microbody targeting signal motif is present at residues 494-496; the sequence is SNL.

This sequence belongs to the catalase family. It depends on heme as a cofactor.

Its subcellular location is the peroxisome matrix. The catalysed reaction is 2 H2O2 = O2 + 2 H2O. Functionally, catalyzes the degradation of hydrogen peroxide (H(2)O(2)) generated by peroxisomal oxidases to water and oxygen, thereby protecting cells from the toxic effects of hydrogen peroxide. The sequence is that of Catalase-A (catA) from Dictyostelium discoideum (Social amoeba).